Reading from the N-terminus, the 452-residue chain is Exodeoxyribonuclease 7 large subunit (452 aa).

Belongs to the XseA family. Heterooligomer composed of large and small subunits.

The protein localises to the cytoplasm. It carries out the reaction Exonucleolytic cleavage in either 5'- to 3'- or 3'- to 5'-direction to yield nucleoside 5'-phosphates.. In terms of biological role, bidirectionally degrades single-stranded DNA into large acid-insoluble oligonucleotides, which are then degraded further into small acid-soluble oligonucleotides. The protein is Exodeoxyribonuclease 7 large subunit of Bacillus thuringiensis (strain Al Hakam).